A 353-amino-acid polypeptide reads, in one-letter code: Photosystem II D2 protein (353 aa).

The residue at position 2 (Thr2) is an N-acetylthreonine. Thr2 bears the Phosphothreonine mark. The chain crosses the membrane as a helical span at residues 41–61 (CAYFALGGWFTGTTFVTSWYT). Residue His118 participates in chlorophyll a binding. Residues 125–141 (GFMLRQFELARSVQLRP) traverse the membrane as a helical segment. Gln130 and Asn143 together coordinate pheophytin a. The helical transmembrane segment at 153–166 (VFVSVFLIYPLGQS) threads the bilayer. Residue His198 coordinates chlorophyll a. A helical transmembrane segment spans residues 208–228 (AALLCAIHGATVENTLFEDGD). Positions 215 and 262 each coordinate a plastoquinone. His215 provides a ligand contact to Fe cation. Position 269 (His269) interacts with Fe cation. The helical transmembrane segment at 279 to 295 (GLWMSAIGVVGLALNLR) threads the bilayer.

It belongs to the reaction center PufL/M/PsbA/D family. As to quaternary structure, PSII is composed of 1 copy each of membrane proteins PsbA, PsbB, PsbC, PsbD, PsbE, PsbF, PsbH, PsbI, PsbJ, PsbK, PsbL, PsbM, PsbT, PsbX, PsbY, PsbZ, Psb30/Ycf12, at least 3 peripheral proteins of the oxygen-evolving complex and a large number of cofactors. It forms dimeric complexes. Requires The D1/D2 heterodimer binds P680, chlorophylls that are the primary electron donor of PSII, and subsequent electron acceptors. It shares a non-heme iron and each subunit binds pheophytin, quinone, additional chlorophylls, carotenoids and lipids. There is also a Cl(-1) ion associated with D1 and D2, which is required for oxygen evolution. The PSII complex binds additional chlorophylls, carotenoids and specific lipids. as cofactor. In terms of processing, phosphorylated on threonine residue(s); phosphorylation increases with increasing light levels.

The protein localises to the plastid. Its subcellular location is the chloroplast thylakoid membrane. It catalyses the reaction 2 a plastoquinone + 4 hnu + 2 H2O = 2 a plastoquinol + O2. Photosystem II (PSII) is a light-driven water:plastoquinone oxidoreductase that uses light energy to abstract electrons from H(2)O, generating O(2) and a proton gradient subsequently used for ATP formation. It consists of a core antenna complex that captures photons, and an electron transfer chain that converts photonic excitation into a charge separation. The D1/D2 (PsbA/PsbD) reaction center heterodimer binds P680, the primary electron donor of PSII as well as several subsequent electron acceptors. D2 is needed for assembly of a stable PSII complex. This is Photosystem II D2 protein from Marchantia polymorpha (Common liverwort).